A 531-amino-acid polypeptide reads, in one-letter code: MVDQVNLATEQTSLLYPEVSRKKEELSVNKWTILPALWVGGFLSALDMTIVASLYPVIGSEFKLMNNASYIVTAYLITNTAFQPLYGRLSDIFGRRPTVVFANAAFTLGTFWCGISRSLPELCMARALAGIGGGGLGTMSSIISSDIVSLRERGTWQGITNIVWGIGGSLGGPLGGLIAQRWGWRTAFHFQVPMGILSTILVAWRVRVKPTVRNSNASLLSRIDYLGSFLLVTGITALVVTFNMGGDAFPWVSPVIITLLVSSVLILFAFYWVEKNIAVEPIAPVEILSQPTPLNVCLGNFFNAFCSFVIVYELPLFFETTLLMPSSEAGVRIFPYVISTSVGSLCSGLYMKKTGRYRNLVIAGFFFMLMGIVSFAVLTSFGHRTPLILISLCLAMTGCSYGMNLTSTLIAIISSLAPEEQAVATGLSYLFRATGSVIGISLSQTTTLSILMKQLASNLKDDPDKDDLIRRLRESISIIPNLPKDIQKLVIKSYATAFTWTFALVAIIAFAGFWCSLRIKQFYLHTSVDRS.

At 1-30 (MVDQVNLATEQTSLLYPEVSRKKEELSVNK) the chain is on the cytoplasmic side. Residues 31–51 (WTILPALWVGGFLSALDMTIV) form a helical membrane-spanning segment. The Lumenal segment spans residues 52–225 (ASLYPVIGSE…NASLLSRIDY (174 aa)). A helical transmembrane segment spans residues 226–246 (LGSFLLVTGITALVVTFNMGG). Over 247–252 (DAFPWV) the chain is Cytoplasmic. Residues 253–273 (SPVIITLLVSSVLILFAFYWV) form a helical membrane-spanning segment. The Lumenal segment spans residues 274 to 297 (EKNIAVEPIAPVEILSQPTPLNVC). A helical transmembrane segment spans residues 298–318 (LGNFFNAFCSFVIVYELPLFF). Over 319–360 (ETTLLMPSSEAGVRIFPYVISTSVGSLCSGLYMKKTGRYRNL) the chain is Cytoplasmic. The helical transmembrane segment at 361–381 (VIAGFFFMLMGIVSFAVLTSF) threads the bilayer. Residues 382–385 (GHRT) are Lumenal-facing. Residues 386 to 406 (PLILISLCLAMTGCSYGMNLT) traverse the membrane as a helical segment. Topologically, residues 407–496 (STLIAIISSL…QKLVIKSYAT (90 aa)) are cytoplasmic. The chain crosses the membrane as a helical span at residues 497 to 517 (AFTWTFALVAIIAFAGFWCSL). The Lumenal segment spans residues 518–531 (RIKQFYLHTSVDRS).

This sequence belongs to the major facilitator superfamily.

Its subcellular location is the vacuole membrane. In terms of biological role, efflux transporter. Confers resistance to a variety of toxic compounds. The sequence is that of Multidrug resistance protein fnx1 (fnx1) from Schizosaccharomyces pombe (strain 972 / ATCC 24843) (Fission yeast).